Reading from the N-terminus, the 448-residue chain is Chromogranin-A (448 aa).

The N-terminal stretch at Met-1–Ala-18 is a signal peptide. Cys-35 and Cys-56 form a disulfide bridge. The tract at residues Leu-116–Tyr-251 is disordered. Basic and acidic residues-rich tracts occupy residues Ala-129–Glu-139 and Gln-158–Ile-175. Ser-197 is modified (phosphoserine). A compositionally biased stretch (basic and acidic residues) spans Val-205–Glu-222. Acidic residues predominate over residues Glu-223–Gly-238. Phosphoserine is present on residues Ser-258 and Ser-288. The interval Leu-263 to Ser-429 is disordered. Gly-308 bears the Glycine amide mark. Positions Lys-310 to Glu-350 are enriched in basic and acidic residues. Phosphoserine occurs at positions 311, 324, and 362. Met-363 carries the methionine sulfoxide modification. Phosphoserine is present on residues Ser-389, Ser-393, Ser-415, and Ser-429. Residues Tyr-405–Asp-422 are compositionally biased toward basic and acidic residues. A glycan (O-linked (Xyl...) (chondroitin sulfate) serine) is linked at Ser-415.

Belongs to the chromogranin/secretogranin protein family. As to quaternary structure, self-interacts; self-assembly is promoted in vitro by chondroitin sulfate attachment which occurs at mildly acidic pH conditions. Interacts with SCG3. Interacts with ITPR1 in the secretory granules. O-glycosylated; contains chondroitin sulfate (CS). CS attachment is pH-dependent, being observed at mildly acidic conditions of pH 5 but not at neutral pH, and promotes self-assembly in vitro. Highly expressed in adrenal medulla and pituitary gland. Weaker expression detected in cerebrum, cerebellum, spinal cord, liver, thyroid gland, striated muscle, lung, spleen, kidney, parotid gland, and sublingual gland.

The protein localises to the secreted. The protein resides in the cytoplasmic vesicle. It is found in the secretory vesicle. It localises to the neuronal dense core vesicle. Functionally, strongly inhibits glucose induced insulin release from the pancreas. Its function is as follows. Inhibits catecholamine release from chromaffin cells and noradrenergic neurons by acting as a non-competitive nicotinic cholinergic antagonist. Can induce mast cell migration, degranulation and production of cytokines and chemokines. In terms of biological role, regulates granule biogenesis in endocrine cells by up-regulating the transcription of protease nexin 1 (SERPINE2) via a cAMP-PKA-SP1 pathway. This leads to inhibition of granule protein degradation in the Golgi complex which in turn promotes granule formation. This is Chromogranin-A (CHGA) from Equus caballus (Horse).